Consider the following 617-residue polypeptide: Electron transfer flavoprotein-ubiquinone oxidoreductase, mitochondrial (617 aa).

The transit peptide at 1–33 (MLVPLAKLSCLAYQCFHALKIKKNYLPLCATRW) directs the protein to the mitochondrion. 71–85 (VVIVGAGPAGLSAAV) is a binding site for FAD. Lysine 96 is modified (N6-acetyllysine). An intramembrane segment occupies 109–130 (IGAHTLSGACLDPGAFKELFPD). An N6-acetyllysine mark is found at lysine 132 and lysine 223. Residues glycine 305 and glycine 306 each coordinate a ubiquinone. Position 357 is an N6-acetyllysine (lysine 357). The stretch at 428–447 (IGLHVTEYEDNLKNSWVWKE) is an intramembrane region. At serine 551 the chain carries Phosphoserine. [4Fe-4S] cluster contacts are provided by cysteine 561, cysteine 586, cysteine 589, and cysteine 592. The region spanning 577–606 (FRLQINAQNCVHCKTCDIKDPSQNINWVVP) is the 4Fe-4S ferredoxin-type domain.

This sequence belongs to the ETF-QO/FixC family. In terms of assembly, monomer. The cofactor is [4Fe-4S] cluster. FAD serves as cofactor.

The protein localises to the mitochondrion inner membrane. It carries out the reaction a ubiquinone + reduced [electron-transfer flavoprotein] = a ubiquinol + oxidized [electron-transfer flavoprotein] + H(+). In terms of biological role, accepts electrons from ETF and reduces ubiquinone. The polypeptide is Electron transfer flavoprotein-ubiquinone oxidoreductase, mitochondrial (Homo sapiens (Human)).